Here is a 319-residue protein sequence, read N- to C-terminus: MDFKDYYKILGVEPTADEKAIKAAYRKLARKYHPDVSKERDAEEKFKEANEAYEVLGDAQKRAEFDEIRKYGGQHGRPFQAPPGWESRGGGGGFEGGDFSDFFSSIFGGRSAGGNPFGGARQQQRSAGRRGQDVELELAVFLEETLSKESKQISFQVPQTNAMGQRTGFTTKTLNVRIPAGVTDGERIRLKGQGAPGSGGGANGDLFLTIRMAPHPLFDVEGHDLIITVPLAPWEAALGAKVAVPTLDGKINLTIRPDSQSGQRLRVPGKGLANKQGERGNLYAQLKVVMPPASDESARELWTKLSEKAAFNPRTQWSK.

Residues 5-69 enclose the J domain; the sequence is DYYKILGVEP…QKRAEFDEIR (65 aa).

The protein localises to the cytoplasm. The protein resides in the nucleoid. In terms of biological role, DNA-binding protein that preferentially recognizes a curved DNA sequence. It is probably a functional analog of DnaJ; displays overlapping activities with DnaJ, but functions under different conditions, probably acting as a molecular chaperone in an adaptive response to environmental stresses other than heat shock. Lacks autonomous chaperone activity; binds native substrates and targets them for recognition by DnaK. Its activity is inhibited by the binding of CbpM. This is Curved DNA-binding protein from Pseudomonas putida (strain ATCC 47054 / DSM 6125 / CFBP 8728 / NCIMB 11950 / KT2440).